The sequence spans 118 residues: Large ribosomal subunit protein bL20 (118 aa).

Belongs to the bacterial ribosomal protein bL20 family.

In terms of biological role, binds directly to 23S ribosomal RNA and is necessary for the in vitro assembly process of the 50S ribosomal subunit. It is not involved in the protein synthesizing functions of that subunit. This is Large ribosomal subunit protein bL20 from Desulfotalea psychrophila (strain LSv54 / DSM 12343).